Here is a 441-residue protein sequence, read N- to C-terminus: Ribosomal protein uS12 methylthiotransferase RimO (441 aa).

Positions 7-117 (PKVSFVSLGC…VLDAVHRALP (111 aa)) constitute an MTTase N-terminal domain. [4Fe-4S] cluster-binding residues include C16, C52, C81, C148, C152, and C155. In terms of domain architecture, Radical SAM core spans 134–371 (LTPRHYAYLK…MARQQKISAR (238 aa)). Positions 374–440 (KRKVGTRQQV…AYDLHGSVAG (67 aa)) constitute a TRAM domain.

Belongs to the methylthiotransferase family. RimO subfamily. The cofactor is [4Fe-4S] cluster.

Its subcellular location is the cytoplasm. The enzyme catalyses L-aspartate(89)-[ribosomal protein uS12]-hydrogen + (sulfur carrier)-SH + AH2 + 2 S-adenosyl-L-methionine = 3-methylsulfanyl-L-aspartate(89)-[ribosomal protein uS12]-hydrogen + (sulfur carrier)-H + 5'-deoxyadenosine + L-methionine + A + S-adenosyl-L-homocysteine + 2 H(+). In terms of biological role, catalyzes the methylthiolation of an aspartic acid residue of ribosomal protein uS12. The chain is Ribosomal protein uS12 methylthiotransferase RimO from Rhodopseudomonas palustris (strain BisB18).